We begin with the raw amino-acid sequence, 68 residues long: Large ribosomal subunit protein bL31 (68 aa).

Zn(2+) contacts are provided by Cys-16, Cys-18, Cys-36, and Cys-39.

Belongs to the bacterial ribosomal protein bL31 family. Type A subfamily. Part of the 50S ribosomal subunit. Zn(2+) serves as cofactor.

Functionally, binds the 23S rRNA. The polypeptide is Large ribosomal subunit protein bL31 (Dictyoglomus turgidum (strain DSM 6724 / Z-1310)).